Here is a 63-residue protein sequence, read N- to C-terminus: Large ribosomal subunit protein uL29 (63 aa).

It belongs to the universal ribosomal protein uL29 family.

In Pseudoalteromonas atlantica (strain T6c / ATCC BAA-1087), this protein is Large ribosomal subunit protein uL29.